Consider the following 227-residue polypeptide: E3 ubiquitin-protein ligase ZNRF1 (227 aa).

The disordered stretch occupies residues 1–42 (MGGKQSTAARSRGPFPGVSTDDSAVPPPGGAPHFGHYRTGGG). A lipid anchor (N-myristoyl glycine) is attached at G2. A required for endosomal and lysosomal localization and myristoylation region spans residues 2 to 10 (GGKQSTAAR). 3 positions are modified to phosphoserine: S50, S52, and S53. Residues 65-105 (GGVPFSLYTPASRGTGDSERAPGGGGSTSDSTYAHGNGYQE) are disordered. Y103 bears the Phosphotyrosine mark. S123 carries the phosphoserine modification. Residues 184 to 225 (CVICLEELLQGDTIARLPCLCIYHKSCIDSWFEVNRSCPEHP) form an RING-type; atypical zinc finger.

As to quaternary structure, interacts with AKT1, GLUL and TUBB2A. Interacts with ZNRF2. Interacts (via its RING domain) with UBE2N. Interacts (when phosphorylated) with YWHAE. In terms of processing, N-myristoylation targets ZNRF1 to intracellular membranes. Phosphorylated by SRC at Tyr-103; leading to 'Lys-63'-linked ubiquitination of TLR3, lysosomal trafficking and degradation.

The protein localises to the endosome. Its subcellular location is the lysosome. It is found in the membrane. It localises to the cytoplasmic vesicle. The protein resides in the secretory vesicle. The protein localises to the synaptic vesicle membrane. It carries out the reaction S-ubiquitinyl-[E2 ubiquitin-conjugating enzyme]-L-cysteine + [acceptor protein]-L-lysine = [E2 ubiquitin-conjugating enzyme]-L-cysteine + N(6)-ubiquitinyl-[acceptor protein]-L-lysine.. Its pathway is protein modification; protein ubiquitination. Its function is as follows. E3 ubiquitin-protein ligase that plays a role in different processes including cell differentiation, receptor recycling or regulation of inflammation. Mediates the ubiquitination of AKT1 and GLUL, thereby playing a role in neuron cells differentiation. Plays a role in the establishment and maintenance of neuronal transmission and plasticity. Regulates Schwann cells differentiation by mediating ubiquitination of GLUL. Promotes neurodegeneration by mediating 'Lys-48'-linked polyubiquitination and subsequent degradation of AKT1 in axons: degradation of AKT1 prevents AKT1-mediated phosphorylation of GSK3B, leading to GSK3B activation and phosphorylation of DPYSL2/CRMP2 followed by destabilization of microtubule assembly in axons. Ubiquitinates the Na(+)/K(+) ATPase alpha-1 subunit/ATP1A1 and thereby influences its endocytosis and/or degradation. Controls ligand-induced EGFR signaling via mediating receptor ubiquitination and recruitment of the ESCRT machinery. Acts as a negative feedback mechanism controlling TLR3 trafficking by mediating TLR3 'Lys-63'-linked polyubiquitination to reduce type I IFN production. Modulates inflammation by promoting caveolin-1/CAV1 ubiquitination and degradation to regulate TLR4-activated immune response. This is E3 ubiquitin-protein ligase ZNRF1 (Znrf1) from Mus musculus (Mouse).